A 336-amino-acid chain; its full sequence is tRNA N6-adenosine threonylcarbamoyltransferase (336 aa).

Residues H111, H115, and Y132 each coordinate Fe cation. Residues 132–136 (YLSGG), D164, D185, and S264 contribute to the substrate site. Fe cation is bound at residue D292.

This sequence belongs to the KAE1 / TsaD family. Fe(2+) serves as cofactor.

The protein localises to the cytoplasm. The enzyme catalyses L-threonylcarbamoyladenylate + adenosine(37) in tRNA = N(6)-L-threonylcarbamoyladenosine(37) in tRNA + AMP + H(+). In terms of biological role, required for the formation of a threonylcarbamoyl group on adenosine at position 37 (t(6)A37) in tRNAs that read codons beginning with adenine. Is probably involved in the transfer of the threonylcarbamoyl moiety of threonylcarbamoyl-AMP (TC-AMP) to the N6 group of A37. The chain is tRNA N6-adenosine threonylcarbamoyltransferase from Sulfurisphaera tokodaii (strain DSM 16993 / JCM 10545 / NBRC 100140 / 7) (Sulfolobus tokodaii).